The sequence spans 559 residues: Aminopeptidase Q (559 aa).

Residues 1 to 13 (MSRPFSSGVYVSR) lie on the Cytoplasmic side of the membrane. A helical; Signal-anchor for type II membrane protein transmembrane segment spans residues 14–34 (GVALLLAALTAVLLLVLVALA). At 35-559 (SLYGSCAHVQ…VPFRHFLAEH (525 aa)) the chain is on the lumenal side. Asn121 and Asn129 each carry an N-linked (GlcNAc...) asparagine glycan. Substrate is bound at residue Glu237. Asn258, Asn285, and Asn343 each carry an N-linked (GlcNAc...) asparagine glycan. Residue 376 to 380 (GAMEN) participates in substrate binding. Residue His412 coordinates Zn(2+). Glu413 functions as the Proton acceptor in the catalytic mechanism. 2 residues coordinate Zn(2+): His416 and Glu435.

It belongs to the peptidase M1 family. Homodimer. Requires Zn(2+) as cofactor. In terms of processing, N-glycosylated.

The protein resides in the membrane. Its activity is regulated as follows. Inhibited by bestatin. Metalloprotease which may be important for placentation by regulating biological activity of key peptides at the embryo-maternal interface. On synthetic substrates it shows a marked preference for Leu-4-methylcoumaryl-7-amide (Leu-MCA) over Met-MCA, Arg-LCA and Lys-LCA. Cleaves the N-terminal amino acid of several peptides such as angiotensin-3, kisspeptin-10 and endokinin C. The polypeptide is Aminopeptidase Q (Mus musculus (Mouse)).